The sequence spans 284 residues: Interferon antagonist OPG039 (284 aa).

ANK repeat units lie at residues 29–58 (NGHSVLYYAIADNNVRLVCTLLNAGALKNL), 60–89 (DNEFPLHQAATLEDTKIVKILLFSGMDDSQ), 93–122 (KGNTALYYAVDSGNMQTVKLFVKKNWRLMF), 127–157 (GWKTSFYHAVMLNDVSIVSYFLSEIPSPFDL), 159–188 (ILLSCIHTTIKNGHVDMMILLLDYMTSTNT), and 192–221 (LFIPDIKLAIDNKDIEMLQALFKYDINIYS).

It belongs to the orthopoxvirus OPG039 family.

The protein resides in the host cytoplasm. Its subcellular location is the host nucleus. In terms of biological role, inhibits antiviral activity induced by type I interferons. Does not block signal transduction of IFN, but is important to counter the host antiviral state induced by a pre-treatment with IFN. Plays a role in the inhibition of host NF-kappa-B activation by preventing the acetylation of the RELA/p65 subunit of NF-kappaB. The chain is Interferon antagonist OPG039 (OPG039) from Cynomys gunnisoni (Gunnison's prairie dog).